We begin with the raw amino-acid sequence, 396 residues long: Elongation factor Tu (396 aa).

Residues 10 to 206 (KPHVNVGTIG…ALDTYIPTPE (197 aa)) enclose the tr-type G domain. The tract at residues 19–26 (GHVDHGKT) is G1. 19-26 (GHVDHGKT) provides a ligand contact to GTP. Position 26 (Thr-26) interacts with Mg(2+). The segment at 60-64 (GITIN) is G2. The G3 stretch occupies residues 81 to 84 (DCPG). GTP-binding positions include 81–85 (DCPGH) and 136–139 (NKAD). Residues 136 to 139 (NKAD) form a G4 region. A G5 region spans residues 174 to 176 (SAK).

This sequence belongs to the TRAFAC class translation factor GTPase superfamily. Classic translation factor GTPase family. EF-Tu/EF-1A subfamily. As to quaternary structure, monomer.

Its subcellular location is the cytoplasm. It carries out the reaction GTP + H2O = GDP + phosphate + H(+). Functionally, GTP hydrolase that promotes the GTP-dependent binding of aminoacyl-tRNA to the A-site of ribosomes during protein biosynthesis. The chain is Elongation factor Tu from Bordetella avium (strain 197N).